The sequence spans 159 residues: ATP synthase subunit delta, mitochondrial (159 aa).

A mitochondrion-targeting transit peptide spans 1–23 (MFRLSAARTLAKSVNTVVAKRTY).

This sequence belongs to the ATPase epsilon chain family. F-type ATPases have 2 components, CF(1) - the catalytic core - and CF(0) - the membrane proton channel. CF(1) has five subunits: alpha(3), beta(3), gamma(1), delta(1), epsilon(1). CF(0) has three main subunits: a, b and c.

It localises to the mitochondrion. It is found in the mitochondrion inner membrane. Its function is as follows. Mitochondrial membrane ATP synthase (F(1)F(0) ATP synthase or Complex V) produces ATP from ADP in the presence of a proton gradient across the membrane which is generated by electron transport complexes of the respiratory chain. F-type ATPases consist of two structural domains, F(1) - containing the extramembraneous catalytic core, and F(0) - containing the membrane proton channel, linked together by a central stalk and a peripheral stalk. During catalysis, ATP turnover in the catalytic domain of F(1) is coupled via a rotary mechanism of the central stalk subunits to proton translocation. Part of the complex F(1) domain and of the central stalk which is part of the complex rotary element. Rotation of the central stalk against the surrounding alpha(3)beta(3) subunits leads to hydrolysis of ATP in three separate catalytic sites on the beta subunits. The chain is ATP synthase subunit delta, mitochondrial (ATP16) from Kluyveromyces lactis (strain ATCC 8585 / CBS 2359 / DSM 70799 / NBRC 1267 / NRRL Y-1140 / WM37) (Yeast).